A 502-amino-acid polypeptide reads, in one-letter code: Mitochondrial fusion and transport protein UGO1 (502 aa).

Met1 bears the N-acetylmethionine mark. The Cytoplasmic portion of the chain corresponds to 1–293; the sequence is MNNNNVTEAT…VINSPDISKS (293 aa). Positions 1 to 294 are binds FZO1; the sequence is MNNNNVTEAT…INSPDISKSF (294 aa). The stretch at 288 to 383 is one Solcar repeat; it reads PDISKSFILA…NSFFNKLFDL (96 aa). A helical; Signal-anchor for type II membrane protein transmembrane segment spans residues 294-314; it reads FILALGAGVFTSIILLPVDLI. The interval 312–502 is binds MGM1; that stretch reads DLIRTRLIVT…VDINMEQEKF (191 aa). Topologically, residues 315-502 are mitochondrial intermembrane; the sequence is RTRLIVTSFK…VDINMEQEKF (188 aa).

As to quaternary structure, interacts with FZO1 through its cytoplasmic domain and with MGM1 through its mitochondrial intermembrane space domain.

It is found in the mitochondrion outer membrane. Required for mitochondrial fusion as well as normal mitochondrial morphology by bridging the essential interaction between FZO1 and MGM1. May coordinate fusion of inner and outer membranes during mitochondrial fusion. This chain is Mitochondrial fusion and transport protein UGO1, found in Saccharomyces cerevisiae (strain ATCC 204508 / S288c) (Baker's yeast).